The chain runs to 466 residues: E3 SUMO-protein ligase TRIM60 (466 aa).

Residues C15 to Q56 form an RING-type zinc finger. The B box-type zinc-finger motif lies at E91–I132. Zn(2+) contacts are provided by C96, H99, C118, and H124. Positions L171–L223 form a coiled coil. The region spanning L272 to D462 is the B30.2/SPRY domain.

It belongs to the TRIM/RBCC family.

E3 SUMO-protein ligase that mediates SUMOylation of TAB2 leading to inhibition of NF-kappa-B and MAPK pathways by suppressing the TRAF6/TAB2/TAK1 complex. The polypeptide is E3 SUMO-protein ligase TRIM60 (Trim60) (Mus musculus (Mouse)).